The following is a 316-amino-acid chain: Phospho-N-acetylmuramoyl-pentapeptide-transferase (316 aa).

The next 10 membrane-spanning stretches (helical) occupy residues 5 to 25 (IILA…LFIP), 49 to 69 (GTPT…TLIF), 76 to 96 (LAIL…DDFL), 116 to 136 (FLLA…EVIF), 141 to 161 (TTID…VGTV), 172 to 192 (GLAA…ALFL), 195 to 212 (ITYG…LGFL), 221 to 241 (IFMG…AAVL), 244 to 264 (LPLI…SVII), and 296 to 316 (VVYA…YSLS).

This sequence belongs to the glycosyltransferase 4 family. MraY subfamily. Requires Mg(2+) as cofactor.

It localises to the cell membrane. The enzyme catalyses UDP-N-acetyl-alpha-D-muramoyl-L-alanyl-gamma-D-glutamyl-meso-2,6-diaminopimeloyl-D-alanyl-D-alanine + di-trans,octa-cis-undecaprenyl phosphate = di-trans,octa-cis-undecaprenyl diphospho-N-acetyl-alpha-D-muramoyl-L-alanyl-D-glutamyl-meso-2,6-diaminopimeloyl-D-alanyl-D-alanine + UMP. Its pathway is cell wall biogenesis; peptidoglycan biosynthesis. Its function is as follows. Catalyzes the initial step of the lipid cycle reactions in the biosynthesis of the cell wall peptidoglycan: transfers peptidoglycan precursor phospho-MurNAc-pentapeptide from UDP-MurNAc-pentapeptide onto the lipid carrier undecaprenyl phosphate, yielding undecaprenyl-pyrophosphoryl-MurNAc-pentapeptide, known as lipid I. The chain is Phospho-N-acetylmuramoyl-pentapeptide-transferase from Thermoanaerobacter pseudethanolicus (strain ATCC 33223 / 39E) (Clostridium thermohydrosulfuricum).